The sequence spans 253 residues: MPKLQLSELLSLTKVEQTLRLAEVNVELEKLTAQERVVWALENLEGNPALSSSFGIQAAVMLQLVTEIKSDTPIILTDTGYLFPETYQFIDQLTDRLNLNLHVFTADESPNWQEARYGKLWEQGVEGIEKYNKLNKVQPMRRALDQLEVGIWFSGLRREQSGSRANLPILSIQNGVFKFLPVLDWTNKEVHYFLKEYDLPYHPLWDQGYLSVGDTHTTQKWEPGMSEEETRFFGLKRECGLHEDDGELGGSGI.

Residue Cys-239 is the Nucleophile; cysteine thiosulfonate intermediate of the active site.

Belongs to the PAPS reductase family. CysH subfamily.

It is found in the cytoplasm. It catalyses the reaction [thioredoxin]-disulfide + sulfite + adenosine 3',5'-bisphosphate + 2 H(+) = [thioredoxin]-dithiol + 3'-phosphoadenylyl sulfate. Its pathway is sulfur metabolism; hydrogen sulfide biosynthesis; sulfite from sulfate: step 3/3. Its function is as follows. Catalyzes the formation of sulfite from phosphoadenosine 5'-phosphosulfate (PAPS) using thioredoxin as an electron donor. The protein is Phosphoadenosine 5'-phosphosulfate reductase of Aliivibrio fischeri (strain MJ11) (Vibrio fischeri).